Here is a 414-residue protein sequence, read N- to C-terminus: Histidine--tRNA ligase (414 aa).

It belongs to the class-II aminoacyl-tRNA synthetase family. Homodimer.

The protein resides in the cytoplasm. The enzyme catalyses tRNA(His) + L-histidine + ATP = L-histidyl-tRNA(His) + AMP + diphosphate + H(+). The polypeptide is Histidine--tRNA ligase (hisS) (Mycoplasma pneumoniae (strain ATCC 29342 / M129 / Subtype 1) (Mycoplasmoides pneumoniae)).